The chain runs to 183 residues: Protein jagunal homolog 1 (183 aa).

Residues 1 to 39 are Cytoplasmic-facing; it reads MASRAGPRAAGTDGSDFQHRERVAMHYQMSVTLKYEIKK. The residue at position 3 (Ser3) is a Phosphoserine. Residues 40–60 traverse the membrane as a helical segment; that stretch reads LIYVHLVIWLLLVAKMSVGHL. Topologically, residues 61-71 are lumenal; the sequence is RLLSHDQVAMP. Residues 72-92 form a helical membrane-spanning segment; it reads YQWEYPYLLSVVPSLLGLLSF. Residues 93-96 lie on the Cytoplasmic side of the membrane; that stretch reads PRNN. The chain crosses the membrane as a helical span at residues 97–117; sequence ISYLVLSMISMGLFSIAPLIY. Residues 118–137 lie on the Lumenal side of the membrane; it reads GSMEMFPAAQQLYRHGKAYR. Residues 138-158 form a helical membrane-spanning segment; it reads FLFGFSAVSVMYLVLVLAVQV. The Cytoplasmic segment spans residues 159–183; it reads HAWQLYYSKKLLDSWFTSTQEKKRK.

This sequence belongs to the jagunal family. In terms of assembly, interacts with COPA, COPB2 and COPG2.

The protein resides in the endoplasmic reticulum membrane. Endoplasmic reticulum transmembrane protein involved in vesicle-mediated transport, which is required for neutrophil function. Required for vesicle-mediated transport; it is however unclear whether it is involved in early secretory pathway or intracellular protein transport. Acts as a regulator of neutrophil function, probably via its role in vesicle-mediated transport: required for defense against fungal pathogens and for granulocyte colony-stimulating factor (GM-CSF) signaling pathway; possibly by regulating glycosylation and/or targeting of proteins contributing to the viability and migration of neutrophils. The protein is Protein jagunal homolog 1 (JAGN1) of Bos taurus (Bovine).